A 245-amino-acid chain; its full sequence is Uridylate kinase (245 aa).

Position 15–18 (15–18 (KLSG)) interacts with ATP. Positions 23-28 (GEEGFG) are involved in allosteric activation by GTP. Gly-57 is a binding site for UMP. Positions 58 and 62 each coordinate ATP. UMP contacts are provided by residues Asp-77 and 138 to 145 (TGNPFCTT). ATP-binding residues include Thr-165, Tyr-171, and Asp-174.

The protein belongs to the UMP kinase family. Homohexamer.

The protein localises to the cytoplasm. The catalysed reaction is UMP + ATP = UDP + ADP. It participates in pyrimidine metabolism; CTP biosynthesis via de novo pathway; UDP from UMP (UMPK route): step 1/1. Allosterically activated by GTP. Inhibited by UTP. Functionally, catalyzes the reversible phosphorylation of UMP to UDP. The polypeptide is Uridylate kinase (Shewanella putrefaciens (strain CN-32 / ATCC BAA-453)).